The sequence spans 494 residues: ATP synthase subunit beta, plastid (494 aa).

Position 169–176 (169–176 (GGAGVGKT)) interacts with ATP.

This sequence belongs to the ATPase alpha/beta chains family. F-type ATPases have 2 components, CF(1) - the catalytic core - and CF(0) - the membrane proton channel. CF(1) has five subunits: alpha(3), beta(3), gamma(1), delta(1), epsilon(1). CF(0) has four main subunits: a(1), b(1), b'(1) and c(9-12).

The protein resides in the plastid membrane. It catalyses the reaction ATP + H2O + 4 H(+)(in) = ADP + phosphate + 5 H(+)(out). Produces ATP from ADP in the presence of a proton gradient across the membrane. The catalytic sites are hosted primarily by the beta subunits. The polypeptide is ATP synthase subunit beta, plastid (atpB) (Cuscuta sandwichiana (Kauna'oa)).